The chain runs to 338 residues: Probable cytosolic iron-sulfur protein assembly protein Ciao1 (338 aa).

WD repeat units follow at residues 12–51 (GHRGRVWGAGWHPRDPVLATCGEDKTIRIWADDGTGRWVP), 58–97 (GHTRTIRDVAWSPCGRFLASASFDATVAIWDRRSGEFECN), 102–141 (GHENEVKSVSWSKSGALLATCSRDKSVWIWEVAQEDEYEC), 147–186 (THSQDVKKVEWHPNEDVLASASYDNTIQLYREDLADSDWS), 193–232 (SHDSTVWSIAFDASGSRLASCSDDQTVRIWQEYKPGNEFG), 234–252 (ACPDGKTPVWKCVCTLSGF), 253–291 (HSRAVYDISWCKKTGLIATACGDDMVRIFREVAGSPANE), and 302–338 (AHSQDANTVEWSPTVAGLLVTTSDDGDVKLWKFEDDE).

It belongs to the WD repeat CIA1 family.

Functionally, essential component of the cytosolic iron-sulfur (Fe/S) protein assembly machinery. Required for the maturation of extramitochondrial Fe/S proteins. This chain is Probable cytosolic iron-sulfur protein assembly protein Ciao1, found in Culex quinquefasciatus (Southern house mosquito).